Here is a 362-residue protein sequence, read N- to C-terminus: Cobalt-precorrin-5B C(1)-methyltransferase (362 aa).

It belongs to the CbiD family.

The enzyme catalyses Co-precorrin-5B + S-adenosyl-L-methionine = Co-precorrin-6A + S-adenosyl-L-homocysteine. Its pathway is cofactor biosynthesis; adenosylcobalamin biosynthesis; cob(II)yrinate a,c-diamide from sirohydrochlorin (anaerobic route): step 6/10. Its function is as follows. Catalyzes the methylation of C-1 in cobalt-precorrin-5B to form cobalt-precorrin-6A. The sequence is that of Cobalt-precorrin-5B C(1)-methyltransferase from Burkholderia ambifaria (strain MC40-6).